A 150-amino-acid polypeptide reads, in one-letter code: Urease accessory protein UreE (150 aa).

This sequence belongs to the UreE family.

The protein resides in the cytoplasm. Functionally, involved in urease metallocenter assembly. Binds nickel. Probably functions as a nickel donor during metallocenter assembly. This Staphylococcus aureus (strain MRSA252) protein is Urease accessory protein UreE.